A 393-amino-acid polypeptide reads, in one-letter code: Matrix metalloproteinase-23 (393 aa).

Residues 1–20 (MGRGACVPSAASGAGDRARQ) lie on the Cytoplasmic side of the membrane. Residues 1-81 (MGRGACVPSA…PHPPVPRRRR (81 aa)) constitute a propeptide that is removed on maturation. Residues 21–41 (LGAVLGALCLFPALVLLAWPG) form a helical; Signal-anchor for type II membrane protein membrane-spanning segment. Residues 42–393 (TPANGAGARV…TYSWRIRVRS (352 aa)) are Lumenal-facing. The interval 60–79 (TSGVLASGSLGPPHPPVPRR) is disordered. N-linked (GlcNAc...) asparagine glycans are attached at residues Asn-95 and Asn-151. His-214 contacts Zn(2+). The active site involves Glu-215. The Zn(2+) site is built by His-218 and His-224. Asn-235 is a glycosylation site (N-linked (GlcNAc...) asparagine). One can recognise a ShKT domain in the interval 258–292 (CLDRLFVCASWARRGFCDTRRRLMKRLCPSSCDFC). Intrachain disulfides connect Cys-258–Cys-292, Cys-265–Cys-285, and Cys-274–Cys-289. Positions 298-383 (PTVAATPPPP…VVRRRQRVLS (86 aa)) constitute an Ig-like C2-type domain. The N-linked (GlcNAc...) asparagine glycan is linked to Asn-319. A disulfide bridge links Cys-324 with Cys-373.

Belongs to the peptidase M10A family. It depends on Zn(2+) as a cofactor. Post-translationally, N-glycosylated. Proteolytic cleavage might yield an active form.

The protein localises to the membrane. The protein resides in the endoplasmic reticulum membrane. Functionally, protease. May regulate the surface expression of some potassium channels by retaining them in the endoplasmic reticulum. This Bos taurus (Bovine) protein is Matrix metalloproteinase-23 (MMP23).